The sequence spans 430 residues: Aspartate aminotransferase, mitochondrial (430 aa).

A mitochondrion-targeting transit peptide spans 1–29; that stretch reads MALLHSGRVLSGMAAAFHPGLAAAASARA. Position 48 is a phosphothreonine (threonine 48). Position 59 is an N6-acetyllysine (lysine 59). Residue glycine 65 participates in substrate binding. Residue lysine 73 is modified to N6-acetyllysine; alternate. An N6-succinyllysine; alternate modification is found at lysine 73. Position 82 is an N6-acetyllysine (lysine 82). Lysine 90 carries the N6-acetyllysine; alternate modification. N6-succinyllysine; alternate is present on lysine 90. Tyrosine 96 bears the 3'-nitrotyrosine; alternate mark. Tyrosine 96 carries the phosphotyrosine; alternate modification. N6-acetyllysine; alternate is present on residues lysine 107 and lysine 122. Lysine 107 and lysine 122 each carry N6-succinyllysine; alternate. Serine 143 bears the Phosphoserine mark. Residue lysine 159 is modified to N6-acetyllysine; alternate. Lysine 159 is modified (N6-succinyllysine; alternate). A substrate-binding site is contributed by tryptophan 162. Lysine 185 is subject to N6-acetyllysine; alternate. Lysine 185 carries the N6-succinyllysine; alternate modification. Asparagine 215 contacts substrate. Lysine 227 is modified (N6-succinyllysine). An N6-acetyllysine modification is found at lysine 234. 2 positions are modified to N6-acetyllysine; alternate: lysine 279 and lysine 296. Lysine 279 carries the post-translational modification N6-(pyridoxal phosphate)lysine; alternate. Lysine 296 is subject to N6-succinyllysine; alternate. Residue lysine 302 is modified to N6-acetyllysine. Lysine 309 bears the N6-acetyllysine; alternate mark. Position 309 is an N6-succinyllysine; alternate (lysine 309). An Asymmetric dimethylarginine modification is found at arginine 313. Residue lysine 338 is modified to N6-acetyllysine; alternate. The residue at position 338 (lysine 338) is an N6-succinyllysine; alternate. At lysine 345 the chain carries N6-acetyllysine. An N6-acetyllysine; alternate modification is found at lysine 363. Lysine 363 is modified (N6-succinyllysine; alternate). An N6-acetyllysine mark is found at lysine 364 and lysine 387. Residues lysine 396 and lysine 404 each carry the N6-acetyllysine; alternate modification. 2 positions are modified to N6-succinyllysine; alternate: lysine 396 and lysine 404. Arginine 407 contributes to the substrate binding site.

It belongs to the class-I pyridoxal-phosphate-dependent aminotransferase family. In terms of assembly, homodimer. Requires pyridoxal 5'-phosphate as cofactor. As to expression, expressed in all tissues tested: liver, pancreas, kidney, heart, spleen, arterioles, and lymphocytes.

It localises to the mitochondrion matrix. The protein resides in the cell membrane. The enzyme catalyses L-aspartate + 2-oxoglutarate = oxaloacetate + L-glutamate. It catalyses the reaction L-kynurenine + 2-oxoglutarate = kynurenate + L-glutamate + H2O. In terms of biological role, catalyzes the irreversible transamination of the L-tryptophan metabolite L-kynurenine to form kynurenic acid (KA). As a member of the malate-aspartate shuttle, it has a key role in the intracellular NAD(H) redox balance. Is important for metabolite exchange between mitochondria and cytosol, and for amino acid metabolism. Facilitates cellular uptake of long-chain free fatty acids. This Rattus norvegicus (Rat) protein is Aspartate aminotransferase, mitochondrial (Got2).